A 196-amino-acid chain; its full sequence is Rho-related protein racL (196 aa).

Gly-10–Thr-17 contacts GTP. An Effector region motif is present at residues Tyr-32–Phe-40. GTP contacts are provided by residues Asp-57–Gln-61 and Thr-116–Asp-119. Cys-193 bears the Cysteine methyl ester mark. Cys-193 carries the S-geranylgeranyl cysteine lipid modification. Residues Ile-194 to Leu-196 constitute a propeptide, removed in mature form.

This sequence belongs to the small GTPase superfamily. Rho family.

Its subcellular location is the cell membrane. The protein is Rho-related protein racL (racL) of Dictyostelium discoideum (Social amoeba).